The chain runs to 178 residues: uncharacterized protein (178 aa).

5 consecutive transmembrane segments (helical) span residues 13 to 33 (GIVLTLTVLINGLIAVLFFMP), 48 to 68 (MLNAIFNSFTFIFLLAALIMI), 80 to 100 (ILAAFTTTLLFLICYVTYHSI), 115 to 135 (IYFFILITHICLSAIIVPLAL), and 155 to 175 (WTMPLWLYVSLTGVIVYLMIS).

It localises to the cell membrane. This is an uncharacterized protein from Bacillus subtilis (strain 168).